A 511-amino-acid polypeptide reads, in one-letter code: Histidine ammonia-lyase (511 aa).

The 5-imidazolinone (Ala-Gly) cross-link spans Ala-143 to Gly-145. The residue at position 144 (Ser-144) is a 2,3-didehydroalanine (Ser).

The protein belongs to the PAL/histidase family. Post-translationally, contains an active site 4-methylidene-imidazol-5-one (MIO), which is formed autocatalytically by cyclization and dehydration of residues Ala-Ser-Gly.

The protein localises to the cytoplasm. It carries out the reaction L-histidine = trans-urocanate + NH4(+). It functions in the pathway amino-acid degradation; L-histidine degradation into L-glutamate; N-formimidoyl-L-glutamate from L-histidine: step 1/3. The chain is Histidine ammonia-lyase from Vibrio parahaemolyticus serotype O3:K6 (strain RIMD 2210633).